We begin with the raw amino-acid sequence, 281 residues long: Voltage-dependent L-type calcium channel subunit alpha-1S (281 aa).

The III repeat unit spans residues 1–8; the sequence is VGFVIVTF. Positions 1-17 are dihydropyridine binding; sequence VGFVIVTFQEQGESEYK. Residues 45 to 281 form an IV repeat; the sequence is NPYQYQIWYV…TCGTGFAYFY (237 aa). The helical transmembrane segment at 59–80 threads the bilayer; the sequence is YFEYLMFFLIMLNTICLGMQHY. The N-linked (GlcNAc...) asparagine glycan is linked to Asn-81. A helical membrane pass occupies residues 89-110; that stretch reads VSDILNVAFTVLFTLEMILKLM. Residues 121 to 140 traverse the membrane as a helical segment; that stretch reads PWNVFDFLIVIGSIIDVILS. Residues 153-171 traverse the membrane as a helical segment; that stretch reads ITFFRLFRVMRLVKLLSRG. A helical membrane pass occupies residues 190–210; it reads YVALLIVMLFFIYAVIGMQMF. The pore-forming intramembrane region spans 233–251; it reads AVLLLFRCATGEAWQEILL. Residues 242–245 carry the Selectivity filter of repeat IV motif; it reads TGEA. Positions 258-281 are dihydropyridine binding; it reads RCDPESDYAEGEEYTCGTGFAYFY. A disulfide bridge connects residues Cys-259 and Cys-273. The tract at residues 270-281 is phenylalkylamine binding; it reads EYTCGTGFAYFY.

This sequence belongs to the calcium channel alpha-1 subunit (TC 1.A.1.11) family. CACNA1S subfamily. In terms of assembly, component of a calcium channel complex consisting of a pore-forming alpha subunit (CACNA1S) and the ancillary subunits CACNB1 or CACNB2, CACNG1 and CACNA2D1. The channel complex contains alpha, beta, gamma and delta subunits in a 1:1:1:1 ratio, i.e. it contains either CACNB1 or CACNB2. CACNA1S channel activity is modulated by the auxiliary subunits (CACNB1 or CACNB2, CACNG1 and CACNA2D1). Interacts with DYSF and JSRP1. Interacts with RYR1. Interacts with CALM. Post-translationally, the alpha-1S subunit is found in two isoforms in the skeletal muscle: a minor form of 212 kDa containing the complete amino acid sequence, and a major form of 190 kDa derived from the full-length form by post-translational proteolysis close to Phe-1690. In terms of processing, both the minor and major forms are phosphorylated in vitro by PKA. Phosphorylation by PKA activates the calcium channel.

The protein resides in the cell membrane. Its subcellular location is the sarcolemma. It is found in the T-tubule. The enzyme catalyses Ca(2+)(in) = Ca(2+)(out). With respect to regulation, channel activity is blocked by dihydropyridines (DHP), phenylalkylamines, and by benzothiazepines. Pore-forming, alpha-1S subunit of the voltage-gated calcium channel that gives rise to L-type calcium currents in skeletal muscle. Calcium channels containing the alpha-1S subunit play an important role in excitation-contraction coupling in skeletal muscle via their interaction with RYR1, which triggers Ca(2+) release from the sarcplasmic reticulum and ultimately results in muscle contraction. Long-lasting (L-type) calcium channels belong to the 'high-voltage activated' (HVA) group. In Gallus gallus (Chicken), this protein is Voltage-dependent L-type calcium channel subunit alpha-1S (CACNA1S).